We begin with the raw amino-acid sequence, 407 residues long: Chorismate synthase (407 aa).

2 residues coordinate NADP(+): R43 and R49. FMN is bound by residues 143–145 (RSS), 264–265 (QA), G308, 323–327 (KPIST), and R349.

The protein belongs to the chorismate synthase family. Homotetramer. FMNH2 is required as a cofactor.

The enzyme catalyses 5-O-(1-carboxyvinyl)-3-phosphoshikimate = chorismate + phosphate. Its pathway is metabolic intermediate biosynthesis; chorismate biosynthesis; chorismate from D-erythrose 4-phosphate and phosphoenolpyruvate: step 7/7. Catalyzes the anti-1,4-elimination of the C-3 phosphate and the C-6 proR hydrogen from 5-enolpyruvylshikimate-3-phosphate (EPSP) to yield chorismate, which is the branch point compound that serves as the starting substrate for the three terminal pathways of aromatic amino acid biosynthesis. This reaction introduces a second double bond into the aromatic ring system. The sequence is that of Chorismate synthase from Corynebacterium efficiens (strain DSM 44549 / YS-314 / AJ 12310 / JCM 11189 / NBRC 100395).